The chain runs to 138 residues: MRTLWIMAVLLVGVEGSLWQFGKMINYVMGESGVLQYLSYGCYCGLGGQGQPTDATDRCCFVHDCCYGKVTGCDPKIDSYTYSKKNGDVVCGGDDPCKKQICECDRVATTCFRDNKDTYDIKYWFYGAKNCQEKSEPC.

An N-terminal signal peptide occupies residues 1-16 (MRTLWIMAVLLVGVEG). Disulfide bonds link cysteine 42/cysteine 131, cysteine 44/cysteine 60, cysteine 59/cysteine 111, cysteine 65/cysteine 138, cysteine 66/cysteine 104, cysteine 73/cysteine 97, and cysteine 91/cysteine 102. Ca(2+) contacts are provided by tyrosine 43, glycine 47, and glycine 48. The active site involves histidine 63. Ca(2+) is bound at residue aspartate 64. Residue aspartate 105 is part of the active site.

The protein belongs to the phospholipase A2 family. Group II subfamily. D49 sub-subfamily. As to quaternary structure, homodimer; non-covalently linked. Ca(2+) serves as cofactor. As to expression, expressed by the venom gland.

It is found in the secreted. The enzyme catalyses a 1,2-diacyl-sn-glycero-3-phosphocholine + H2O = a 1-acyl-sn-glycero-3-phosphocholine + a fatty acid + H(+). Inhibited by EDTA and bromophenacyl bromide (BPB). Snake venom phospholipase A2 (PLA2) that displays edema-inducing activities (activity that is inhibited by EDTA and dexamethasone), inhibits phospholipid-dependent collagen/ADP-induced platelet aggregation, possess hypotensive as well as anticoagulant activities. In addition, this enzyme shows bactericidal activity against E.coli and S.aureus. PLA2 catalyzes the calcium-dependent hydrolysis of the 2-acyl groups in 3-sn-phosphoglycerides. The polypeptide is Acidic phospholipase A2 BthA-1 (Bothrops jararacussu (Jararacussu)).